The chain runs to 96 residues: Small ribosomal subunit protein bS6 (96 aa).

This sequence belongs to the bacterial ribosomal protein bS6 family.

In terms of biological role, binds together with bS18 to 16S ribosomal RNA. The chain is Small ribosomal subunit protein bS6 from Salinispora arenicola (strain CNS-205).